Consider the following 117-residue polypeptide: Minor capsid protein p17 (117 aa).

N-linked (GlcNAc...) asparagine; by host glycosylation occurs at Asn-12. The chain crosses the membrane as a helical span at residues 39–59 (AIILGILILLVIILIIVAIVY). N-linked (GlcNAc...) asparagine; by host glycosylation is found at Asn-61 and Asn-97.

Belongs to the asfivirus minor capsid protein p17 family. Interacts with the minor capsid protein M1249L and with the hexon capsid protein p72 capsomers; these interactions form a rigid zipper structure that stabilizes the capsomers. Interacts with host STING1.

Its subcellular location is the virion membrane. It localises to the host endoplasmic reticulum membrane. Its function is as follows. Together with the penton and the other minor capsid proteins (M1249L, p49), forms a complicated network immediately below the outer capsid shell, stabilizing the whole capsid. Three copies of p17 encircle each p72 capsomer in the inner capsid shell, anchoring p72 capsomers on the inner membrane. Required for the assembly of the capsid and icosahedral morphogenesis. Additionally, inhibits the host cGAS-STING pathway through its interaction with STING1 and subsequent interference of the recruitment of downstream components TBK1 and IKBKE. This chain is Minor capsid protein p17, found in Ornithodoros (relapsing fever ticks).